Consider the following 158-residue polypeptide: SsrA-binding protein (158 aa).

Belongs to the SmpB family.

Its subcellular location is the cytoplasm. Its function is as follows. Required for rescue of stalled ribosomes mediated by trans-translation. Binds to transfer-messenger RNA (tmRNA), required for stable association of tmRNA with ribosomes. tmRNA and SmpB together mimic tRNA shape, replacing the anticodon stem-loop with SmpB. tmRNA is encoded by the ssrA gene; the 2 termini fold to resemble tRNA(Ala) and it encodes a 'tag peptide', a short internal open reading frame. During trans-translation Ala-aminoacylated tmRNA acts like a tRNA, entering the A-site of stalled ribosomes, displacing the stalled mRNA. The ribosome then switches to translate the ORF on the tmRNA; the nascent peptide is terminated with the 'tag peptide' encoded by the tmRNA and targeted for degradation. The ribosome is freed to recommence translation, which seems to be the essential function of trans-translation. The chain is SsrA-binding protein from Roseiflexus sp. (strain RS-1).